The chain runs to 173 residues: Protein tyrosine phosphatase type IVA 3 (173 aa).

The 154-residue stretch at 8 to 161 folds into the Tyrosine-protein phosphatase domain; that stretch reads APVEVSYKHM…YRPKQRLRFK (154 aa). Cysteines 49 and 104 form a disulfide. The Proton donor role is filled by aspartate 72. The active-site Phosphocysteine intermediate is cysteine 104. Residue arginine 110 participates in substrate binding. Cysteine 170 bears the Cysteine methyl ester mark. The S-farnesyl cysteine moiety is linked to residue cysteine 170. A propeptide spans 171–173 (removed in mature form); the sequence is CVM.

Belongs to the protein-tyrosine phosphatase family. In terms of assembly, interacts with tubulin. In terms of processing, farnesylated. Farnesylation is required for membrane targeting. In terms of tissue distribution, mainly expressed in cardiomyocytes and skeletal muscle; also found in pancreas. Consistently overexpressed in colon cancer metastasis.

Its subcellular location is the cell membrane. It localises to the early endosome. It carries out the reaction O-phospho-L-tyrosyl-[protein] + H2O = L-tyrosyl-[protein] + phosphate. Inhibited by sodium orthovanadate and peroxovanadium compounds, and by pentamidine. Functionally, protein tyrosine phosphatase which stimulates progression from G1 into S phase during mitosis. Enhances cell proliferation, cell motility and invasive activity, and promotes cancer metastasis. May be involved in the progression of cardiac hypertrophy by inhibiting intracellular calcium mobilization in response to angiotensin II. The protein is Protein tyrosine phosphatase type IVA 3 (PTP4A3) of Homo sapiens (Human).